The following is a 742-amino-acid chain: Phosphoribosylformylglycinamidine synthase subunit PurL (742 aa).

His54 is a catalytic residue. ATP is bound by residues Tyr57 and Lys96. Glu98 is a binding site for Mg(2+). Residues 99–102 and Arg121 each bind substrate; that span reads SHNH. His100 acts as the Proton acceptor in catalysis. Asp122 serves as a coordination point for Mg(2+). Position 245 (Gln245) interacts with substrate. Residue Asp273 coordinates Mg(2+). 317–319 contributes to the substrate binding site; the sequence is ESQ. Residues Asp500 and Gly537 each contribute to the ATP site. Mg(2+) is bound at residue Asn538. Ser540 provides a ligand contact to substrate.

It belongs to the FGAMS family. Monomer. Part of the FGAM synthase complex composed of 1 PurL, 1 PurQ and 2 PurS subunits.

Its subcellular location is the cytoplasm. It catalyses the reaction N(2)-formyl-N(1)-(5-phospho-beta-D-ribosyl)glycinamide + L-glutamine + ATP + H2O = 2-formamido-N(1)-(5-O-phospho-beta-D-ribosyl)acetamidine + L-glutamate + ADP + phosphate + H(+). It participates in purine metabolism; IMP biosynthesis via de novo pathway; 5-amino-1-(5-phospho-D-ribosyl)imidazole from N(2)-formyl-N(1)-(5-phospho-D-ribosyl)glycinamide: step 1/2. Its function is as follows. Part of the phosphoribosylformylglycinamidine synthase complex involved in the purines biosynthetic pathway. Catalyzes the ATP-dependent conversion of formylglycinamide ribonucleotide (FGAR) and glutamine to yield formylglycinamidine ribonucleotide (FGAM) and glutamate. The FGAM synthase complex is composed of three subunits. PurQ produces an ammonia molecule by converting glutamine to glutamate. PurL transfers the ammonia molecule to FGAR to form FGAM in an ATP-dependent manner. PurS interacts with PurQ and PurL and is thought to assist in the transfer of the ammonia molecule from PurQ to PurL. This chain is Phosphoribosylformylglycinamidine synthase subunit PurL, found in Geobacillus thermodenitrificans (strain NG80-2).